The chain runs to 34 residues: Mytilin-A (34 aa).

Intrachain disulfides connect cysteine 2/cysteine 27, cysteine 6/cysteine 29, cysteine 10/cysteine 31, and cysteine 15/cysteine 34.

The protein resides in the secreted. Has antibacterial activity against A.viridans, B.megaterium, M.luteus, E.faecalis, S.aureus and E.coli. It is active against the marine species A.carrageenovora, P.alginovora and C.drobachiensis. This is Mytilin-A from Mytilus edulis (Blue mussel).